The primary structure comprises 381 residues: F-box/LRR-repeat protein At4g14103 (381 aa).

One can recognise an F-box domain in the interval 7–60 (RDVISSLPDDISSHILSFLPTKEAASTSVLSKKWRYLFAFVPNLDLDDSVYLNP). 6 LRR repeats span residues 118–146 (DLHLNLESEFLLPSQVYLCKTLVWLKLRF), 171–196 (HFEEHGVGLTKLLSGCPMLEDLVLDD), 218–243 (SWQERDEFPKSVLLDTPNLVYLKFTD), 249–274 (YPKVNLDSLVEAHIDLRLLKPLLINY), 299–330 (TLYLSANTLQVLTYSCDAIPIFNNLTHLTIES), and 331–356 (NPRVGWQSVPGLLKNSPNLETLIFQG).

This is F-box/LRR-repeat protein At4g14103 from Arabidopsis thaliana (Mouse-ear cress).